Here is a 429-residue protein sequence, read N- to C-terminus: Ribosomal RNA small subunit methyltransferase B (429 aa).

S-adenosyl-L-methionine is bound by residues 254 to 260, Asp277, Asp303, and Asp322; that span reads CAAPGGK. Cys375 functions as the Nucleophile in the catalytic mechanism.

It belongs to the class I-like SAM-binding methyltransferase superfamily. RsmB/NOP family.

The protein resides in the cytoplasm. The catalysed reaction is cytidine(967) in 16S rRNA + S-adenosyl-L-methionine = 5-methylcytidine(967) in 16S rRNA + S-adenosyl-L-homocysteine + H(+). In terms of biological role, specifically methylates the cytosine at position 967 (m5C967) of 16S rRNA. The protein is Ribosomal RNA small subunit methyltransferase B of Salmonella arizonae (strain ATCC BAA-731 / CDC346-86 / RSK2980).